The primary structure comprises 204 residues: V-set and transmembrane domain-containing protein 2-like protein (204 aa).

The first 24 residues, 1 to 24 (MGAPLAVALGALHYLALFLQLGGA), serve as a signal peptide directing secretion. Residues 41–158 (ALFTETPHDM…DGKARHHKVK (118 aa)) enclose the Ig-like domain. An intrachain disulfide couples Cys62 to Cys142. Residues 168–204 (NSVLHLPEAPPAAPAPPPPKPGKELRKRSVDQEACSL) form a disordered region. Residues 175–187 (EAPPAAPAPPPPK) show a composition bias toward pro residues. Over residues 188–198 (PGKELRKRSVD) the composition is skewed to basic and acidic residues.

The polypeptide is V-set and transmembrane domain-containing protein 2-like protein (VSTM2L) (Homo sapiens (Human)).